Here is a 488-residue protein sequence, read N- to C-terminus: Sterol 14-demethylase (488 aa).

Residues 12–32 (TGLVIVATLVIAKLIFSFFTS) form a helical membrane-spanning segment. C433 contacts heme.

It belongs to the cytochrome P450 family. Heme serves as cofactor. As to expression, expressed in leaves, roots, stems, siliques, flowers, flower buds and seedlings.

It is found in the membrane. The catalysed reaction is a 14alpha-methyl steroid + 3 reduced [NADPH--hemoprotein reductase] + 3 O2 = a Delta(14) steroid + formate + 3 oxidized [NADPH--hemoprotein reductase] + 4 H2O + 4 H(+). In terms of biological role, involved in sterol biosynthesis. Catalyzes the 14-alpha demethylation of obtusifoliol to 4 alpha-methyl-5 alpha-ergosta-8,14,24(28)-trien-3 beta-ol. The sequence is that of Sterol 14-demethylase (CYP51G1) from Arabidopsis thaliana (Mouse-ear cress).